Here is a 185-residue protein sequence, read N- to C-terminus: Sulfopyruvate decarboxylase subunit beta (185 aa).

This sequence belongs to the TPP enzyme family. Heterododecamer composed of 6 subunits alpha and 6 subunits beta. The cofactor is thiamine diphosphate.

The catalysed reaction is 3-sulfopyruvate + H(+) = sulfoacetaldehyde + CO2. It participates in cofactor biosynthesis; coenzyme M biosynthesis; sulfoacetaldehyde from phosphoenolpyruvate and sulfite: step 4/4. Its function is as follows. Involved in the biosynthesis of the coenzyme M (2-mercaptoethanesulfonic acid). Catalyzes the decarboxylation of sulfopyruvate to sulfoacetaldehyde. The sequence is that of Sulfopyruvate decarboxylase subunit beta from Methanothermobacter thermautotrophicus (strain ATCC 29096 / DSM 1053 / JCM 10044 / NBRC 100330 / Delta H) (Methanobacterium thermoautotrophicum).